We begin with the raw amino-acid sequence, 336 residues long: MEGHLSDGLVEVGPNGRERYYDSSGYGRPDGAGVRLAPVEAAYLLARGDLDAVDGMGLEAFLADTPDLVVPFLVYRDLRERGFYVSPALEGWVADHAGIDFVVHPRGDGPWDGTVAYRVRVVDERGSVRLDSLGDVVLAVVDEESELTYLETDRPAVDGTSGLEADLTADGVLLEDRVLCWDAPPALYEQGFYGQRMDREDGPLQLSLLEAAHLAATGVLSVAGGAAAVEARGRDAEGERFDRRLTVYRTLRERGVVPKTGFKFGADFRTYADVDSVSELGHSELLVRVLPADATLSPRDVALDVRLAHGVRKRMVFALVDDGDEIRWVSVSRLTP.

Catalysis depends on residues Y271, H282, and K313.

It belongs to the tRNA-intron endonuclease family. Archaeal long subfamily. As to quaternary structure, homodimer.

It catalyses the reaction pretRNA = a 3'-half-tRNA molecule with a 5'-OH end + a 5'-half-tRNA molecule with a 2',3'-cyclic phosphate end + an intron with a 2',3'-cyclic phosphate and a 5'-hydroxyl terminus.. In terms of biological role, endonuclease that removes tRNA introns. Cleaves pre-tRNA at the 5'- and 3'-splice sites to release the intron. The products are an intron and two tRNA half-molecules bearing 2',3' cyclic phosphate and 5'-OH termini. Recognizes a pseudosymmetric substrate in which 2 bulged loops of 3 bases are separated by a stem of 4 bp. The polypeptide is tRNA-splicing endonuclease (Natronomonas pharaonis (strain ATCC 35678 / DSM 2160 / CIP 103997 / JCM 8858 / NBRC 14720 / NCIMB 2260 / Gabara) (Halobacterium pharaonis)).